The sequence spans 183 residues: Oligoribonuclease (183 aa).

The region spanning 8 to 171 is the Exonuclease domain; that stretch reads LIWLDLEMTG…QDIRDSIEEL (164 aa). Y129 is a catalytic residue.

This sequence belongs to the oligoribonuclease family.

The protein localises to the cytoplasm. Functionally, 3'-to-5' exoribonuclease specific for small oligoribonucleotides. The protein is Oligoribonuclease of Coxiella burnetii (strain RSA 493 / Nine Mile phase I).